A 465-amino-acid chain; its full sequence is Opioid growth factor receptor-like protein 1 (465 aa).

2 disordered regions span residues methionine 1–lysine 89 and glutamate 309–glycine 465. 4 stretches are compositionally biased toward basic and acidic residues: residues arginine 48–glycine 59, proline 316–lysine 325, threonine 363–glutamate 396, and serine 426–glutamate 440. Over residues proline 442 to glycine 465 the composition is skewed to polar residues.

Belongs to the opioid growth factor receptor family.

The polypeptide is Opioid growth factor receptor-like protein 1 (Ogfrl1) (Rattus norvegicus (Rat)).